The chain runs to 148 residues: Glutamyl-tRNA(Gln) amidotransferase subunit C, mitochondrial (148 aa).

It belongs to the GatC family. In terms of assembly, subunit of the heterotrimeric GatCAB amidotransferase (AdT) complex, composed of A, B and C subunits.

It is found in the mitochondrion. It catalyses the reaction L-glutamyl-tRNA(Gln) + L-glutamine + ATP + H2O = L-glutaminyl-tRNA(Gln) + L-glutamate + ADP + phosphate + H(+). Its function is as follows. Allows the formation of correctly charged Gln-tRNA(Gln) through the transamidation of misacylated Glu-tRNA(Gln) in the mitochondria. The reaction takes place in the presence of glutamine and ATP through an activated gamma-phospho-Glu-tRNA(Gln). This chain is Glutamyl-tRNA(Gln) amidotransferase subunit C, mitochondrial, found in Drosophila simulans (Fruit fly).